Reading from the N-terminus, the 329-residue chain is Probable acyltransferase FabY (329 aa).

Residues 18-162 (YHLRVPQTEE…RHFLMIKPVA (145 aa)) enclose the N-acetyltransferase domain.

Belongs to the acetyltransferase family. FabY subfamily.

It participates in lipid metabolism; fatty acid biosynthesis. In terms of biological role, supports initiation of fatty acid biosynthesis in the absence of FabH. The chain is Probable acyltransferase FabY from Escherichia coli O157:H7.